The following is a 270-amino-acid chain: Co-chaperone protein DjlA (270 aa).

Residues Met-1–Lys-6 are Periplasmic-facing. The chain crosses the membrane as a helical span at residues Ile-7–His-31. Topologically, residues Met-32–Lys-270 are cytoplasmic. Residues Asp-204 to Lys-270 form the J domain.

In terms of assembly, homodimer.

The protein resides in the cell inner membrane. Regulatory DnaK co-chaperone. Direct interaction between DnaK and DjlA is needed for the induction of the wcaABCDE operon, involved in the synthesis of a colanic acid polysaccharide capsule, possibly through activation of the RcsB/RcsC phosphotransfer signaling pathway. The colanic acid capsule may help the bacterium survive conditions outside the host. This chain is Co-chaperone protein DjlA, found in Salmonella paratyphi A (strain ATCC 9150 / SARB42).